The chain runs to 468 residues: MSSGKIVQVIGPVVDVEFSLDQSLPDINNALVVYKNDEKKSKVVLETALELGDGVIRTIAMESTDGLQRGMEVIDTGKAISVPVGKDTLGRVFNVLGDTIDLGSSFPEDAERSEIHKKAPSFDELSTSTEILETGIKVIDLLAPYLKGGKVGLFGGAGVGKTVLIQELIHNIAQEHGGISVFTGVGERTREGNDLYYEMKDSGVIEKTAMVFGQMNEPPGARMRVALTGLTIAEYFRDVEGQDVLLFIDNIFRFTQAGSEVSALLGRMPSAVGYQPTLATEMGQLQERITSTKKGSITSIQAIYVPADDYTDPAPATAFAHLDATTNLERKLTEQGIYPAVDPLASSSSALAPEIVGEEHYKVATEVQHVLQRYRELQDIIAILGMDELSDQEKVLVSRARRVQFFLSQNFNVAEQFTGLPGSYVPVEETVKGFREILEGKYDDLPEEAFRSVGRIEDVVEKAKKLGY.

155-162 contacts ATP; that stretch reads GGAGVGKT.

The protein belongs to the ATPase alpha/beta chains family. In terms of assembly, F-type ATPases have 2 components, CF(1) - the catalytic core - and CF(0) - the membrane proton channel. CF(1) has five subunits: alpha(3), beta(3), gamma(1), delta(1), epsilon(1). CF(0) has three main subunits: a(1), b(2) and c(9-12). The alpha and beta chains form an alternating ring which encloses part of the gamma chain. CF(1) is attached to CF(0) by a central stalk formed by the gamma and epsilon chains, while a peripheral stalk is formed by the delta and b chains.

It localises to the cell membrane. It catalyses the reaction ATP + H2O + 4 H(+)(in) = ADP + phosphate + 5 H(+)(out). Its function is as follows. Produces ATP from ADP in the presence of a proton gradient across the membrane. The catalytic sites are hosted primarily by the beta subunits. In Enterococcus hirae (strain ATCC 9790 / DSM 20160 / JCM 8729 / LMG 6399 / NBRC 3181 / NCIMB 6459 / NCDO 1258 / NCTC 12367 / WDCM 00089 / R), this protein is ATP synthase subunit beta.